The following is a 374-amino-acid chain: Pectate lyase 1 (374 aa).

An N-terminal signal peptide occupies residues 1 to 22 (MKYLLPSAAAGLLLLAAQPTMA). C93 and C176 are oxidised to a cystine. The Ca(2+) site is built by D150, D152, E187, and D191. Residue R239 is part of the active site. An intrachain disulfide couples C350 to C373.

The protein belongs to the polysaccharide lyase 1 family. PLADES subfamily. Ca(2+) serves as cofactor.

The protein localises to the secreted. It carries out the reaction Eliminative cleavage of (1-&gt;4)-alpha-D-galacturonan to give oligosaccharides with 4-deoxy-alpha-D-galact-4-enuronosyl groups at their non-reducing ends.. It participates in glycan metabolism; pectin degradation; 2-dehydro-3-deoxy-D-gluconate from pectin: step 2/5. Involved in maceration and soft-rotting of plant tissue. The polypeptide is Pectate lyase 1 (pel1) (Pectobacterium carotovorum (Erwinia carotovora)).